The chain runs to 70 residues: Putative membrane protein insertion efficiency factor (70 aa).

This sequence belongs to the UPF0161 family.

Its subcellular location is the cell inner membrane. Its function is as follows. Could be involved in insertion of integral membrane proteins into the membrane. This Methylobacillus flagellatus (strain ATCC 51484 / DSM 6875 / VKM B-1610 / KT) protein is Putative membrane protein insertion efficiency factor.